The chain runs to 471 residues: Anthranilate 1,2-dioxygenase large subunit (471 aa).

A Rieske domain is found at 52 to 160 (IYACHESEIP…IASYRGFVFV (109 aa)). The [2Fe-2S] cluster site is built by cysteine 93, histidine 95, cysteine 113, and histidine 116. 3 residues coordinate Fe cation: histidine 220, histidine 225, and aspartate 379.

The protein belongs to the bacterial ring-hydroxylating dioxygenase alpha subunit family. In terms of assembly, the anthranilate dioxygenase (AntDO) multicomponent enzyme system is composed of an oxygenase component and a NADH:acceptor reductase component (AntC). The oxygenase component is a heterohexamer of 3 large (AntA) and 3 small (AntB) subunits. Requires Fe cation as cofactor. The cofactor is [2Fe-2S] cluster.

The enzyme catalyses anthranilate + NADH + O2 + 3 H(+) = catechol + NH4(+) + CO2 + NAD(+). The catalysed reaction is anthranilate + NADPH + O2 + 3 H(+) = catechol + NH4(+) + CO2 + NADP(+). It functions in the pathway aromatic compound metabolism; anthranilate degradation via hydroxylation; catechol from anthranilate: step 1/1. Component of anthranilate dioxygenase multicomponent enzyme system which catalyzes the incorporation of both atoms of molecular oxygen into anthranilate to form catechol. In Acinetobacter baylyi (strain ATCC 33305 / BD413 / ADP1), this protein is Anthranilate 1,2-dioxygenase large subunit.